The primary structure comprises 297 residues: IMPACT family member C14C8.09c (297 aa).

Residues 225–255 adopt a coiled-coil conformation; that stretch reads LRSELQEKNQKDKKKEVNKLEEKMTNAKEPN. Basic and acidic residues-rich tracts occupy residues 228–250 and 280–297; these read ELQE…KMTN and SVDH…EKEE. The tract at residues 228–297 is disordered; that stretch reads ELQEKNQKDK…KIIKDVEKEE (70 aa).

The protein belongs to the IMPACT family.

The sequence is that of IMPACT family member C14C8.09c from Schizosaccharomyces pombe (strain 972 / ATCC 24843) (Fission yeast).